The sequence spans 288 residues: tRNA pseudouridine synthase A (288 aa).

The active-site Nucleophile is the aspartate 59. Substrate is bound at residue tyrosine 134.

Belongs to the tRNA pseudouridine synthase TruA family. Homodimer.

It carries out the reaction uridine(38/39/40) in tRNA = pseudouridine(38/39/40) in tRNA. Functionally, formation of pseudouridine at positions 38, 39 and 40 in the anticodon stem and loop of transfer RNAs. The protein is tRNA pseudouridine synthase A of Leifsonia xyli subsp. xyli (strain CTCB07).